Consider the following 407-residue polypeptide: Putative colanic acid biosynthesis glycosyl transferase WcaI (407 aa).

It functions in the pathway slime biogenesis; slime polysaccharide biosynthesis. In Escherichia coli (strain K12), this protein is Putative colanic acid biosynthesis glycosyl transferase WcaI (wcaI).